Here is a 108-residue protein sequence, read N- to C-terminus: Protein FMC1 homolog (108 aa).

The protein belongs to the FMC1 family.

The protein is Protein FMC1 homolog of Caenorhabditis elegans.